The sequence spans 255 residues: MIQIENQTVSGIPFLHIVKEENRHRAVPLVIFIHGFTSAKEHNLHIAYLLAEKGFRAVLPEALHHGERGEEMAVEELAGHFWDIVLNEIEEIGVLKNHFEKEGLIDGGRIGLAGTSMGGITTLGALTAYDWIKAGVSLMGSPNYVELFQQQIDHIQSQGIEIDVPEEKVQQLMKRLELRDLSLQPEKLQQRPLLFWHGAKDKVVPYAPTRKFYDTIKSHYSEQPERLQFIGDENADHKVPRAAVLKTIEWFETYL.

The chain is Putative esterase YitV (yitV) from Bacillus subtilis (strain 168).